The primary structure comprises 55 residues: UPF0391 membrane protein Meso_3110 (55 aa).

2 consecutive transmembrane segments (helical) span residues 4–24 (WALVFLVVAIIAGALGFGGIA) and 30–50 (IAQILFYIFLILLVVSLLFGL).

It belongs to the UPF0391 family.

The protein localises to the cell membrane. The protein is UPF0391 membrane protein Meso_3110 of Chelativorans sp. (strain BNC1).